Consider the following 297-residue polypeptide: Formylmethanofuran--tetrahydromethanopterin formyltransferase (297 aa).

Belongs to the FTR family. In terms of assembly, homotetramer.

It is found in the cytoplasm. It catalyses the reaction N-formylmethanofuran + 5,6,7,8-tetrahydromethanopterin + H(+) = N(5)-formyl-5,6,7,8-tetrahydromethanopterin + methanofuran. It functions in the pathway one-carbon metabolism; methanogenesis from CO(2); 5,10-methenyl-5,6,7,8-tetrahydromethanopterin from CO(2): step 2/3. Catalyzes the reversible transfer of a formyl group from formylmethanofuran (formyl-MFR) to tetrahydromethanopterin (H(4)MPT) to produce 5-formyl tetrahydromethanopterin (5-formyl-H(4)MPT) and methanofuran (MFR). The chain is Formylmethanofuran--tetrahydromethanopterin formyltransferase from Methanosarcina mazei (strain ATCC BAA-159 / DSM 3647 / Goe1 / Go1 / JCM 11833 / OCM 88) (Methanosarcina frisia).